A 418-amino-acid chain; its full sequence is MSKVEFNKETGPREVFCGLTSIVWLHRRMPDAFFLVVGSRTCAHLIQSAAGVMIFAEPRFGTAILEEKDLAGLADAHEELDRVVNDLISRRPEIKTLFLVGSCPSEVIKLDLATVAEKLNKRFLGKIKFVNYSGSGIETTFTQGEDGALKALIPLMEDSNEEKLLLVGTLANNVEDRFKKIFRNLGISNVESFPPRQSTELPKIGKNTKVLLTQPYLSDTVRDLKHRGCEIISAPFPLGIEGSTKWFLAAAKAFKISALKVHEIISPLISRAKLALESHKDILKGKRLFLLPESQLEISLARFLHNECEMDLIEIGTPYLNKDLMKEEINLLPDNTKIVEGQHVEKQLDRVREANPDLVVCGMGLANPLEAEGISTKWSIEMVFSPIHGIDQAADLAGLFSKPLRRNQILTSKTLVTN.

3 residues coordinate [4Fe-4S] cluster: Cys-17, Cys-42, and Cys-103.

The protein belongs to the BchN/ChlN family. In terms of assembly, protochlorophyllide reductase is composed of three subunits; ChlL, ChlN and ChlB. Forms a heterotetramer of two ChlB and two ChlN subunits. It depends on [4Fe-4S] cluster as a cofactor.

The enzyme catalyses chlorophyllide a + oxidized 2[4Fe-4S]-[ferredoxin] + 2 ADP + 2 phosphate = protochlorophyllide a + reduced 2[4Fe-4S]-[ferredoxin] + 2 ATP + 2 H2O. The protein operates within porphyrin-containing compound metabolism; chlorophyll biosynthesis (light-independent). Its function is as follows. Component of the dark-operative protochlorophyllide reductase (DPOR) that uses Mg-ATP and reduced ferredoxin to reduce ring D of protochlorophyllide (Pchlide) to form chlorophyllide a (Chlide). This reaction is light-independent. The NB-protein (ChlN-ChlB) is the catalytic component of the complex. This chain is Light-independent protochlorophyllide reductase subunit N, found in Prochlorococcus marinus (strain MIT 9215).